A 971-amino-acid chain; its full sequence is GEM-interacting protein (971 aa).

Ser19 carries the phosphoserine modification. 3 disordered regions span residues 41 to 79 (AGDP…PEGP), 231 to 267 (LRAR…AQAK), and 383 to 476 (DTKK…IENG). Positions 44–56 (PVRREDLEPDKAD) are enriched in basic and acidic residues. The span at 59–69 (TVVTEENSEAS) shows a compositional bias: polar residues. 6 positions are modified to phosphoserine: Ser75, Ser235, Ser238, Ser247, Ser436, and Ser440. In terms of domain architecture, F-BAR spans 85-348 (EELDLRLIRT…CCVPFEPGQR (264 aa)). Residues 458–471 (SSDDFEERDPDLGD) show a composition bias toward acidic residues. The Phorbol-ester/DAG-type zinc finger occupies 492 to 536 (THRLRRLRGPAKCRECEAFMVSGTECEECFLTCHKRCLETLLILC). The Rho-GAP domain maps to 553–756 (LQLPRDFPEE…FLIVHYEQIF (204 aa)). Phosphothreonine is present on Thr659. The segment at 799 to 865 (IALDSSPDPK…LGAQSRGHFS (67 aa)) is disordered. Residues 805-817 (PDPKHHSALEKCP) show a composition bias toward basic and acidic residues. Residues Ser884, Ser908, and Ser924 each carry the phosphoserine modification.

In terms of assembly, interacts with GEM through its N-terminal.

Functionally, stimulates, in vitro and in vivo, the GTPase activity of RhoA. The sequence is that of GEM-interacting protein (Gmip) from Mus musculus (Mouse).